Reading from the N-terminus, the 210-residue chain is Noranthrone monooxygenase (210 aa).

The next 4 helical transmembrane spans lie at 59–79, 105–125, 131–151, and 188–208; these read TGSF…PILI, GIAL…YSVG, WMVA…FMNA, and VRAL…CGVV.

The protein belongs to the anthrone oxygenase family.

It is found in the membrane. It carries out the reaction noranthrone + O2 = norsolorinic acid + H2O. It participates in mycotoxin biosynthesis; aflatoxin biosynthesis. Monooxygenase that converts norsolorinic acid anthrone to norsolorinic acid during aflatoxin biosynthesis. This Aspergillus flavus (strain ATCC 200026 / FGSC A1120 / IAM 13836 / NRRL 3357 / JCM 12722 / SRRC 167) protein is Noranthrone monooxygenase (hypC).